A 117-amino-acid chain; its full sequence is Eukaryotic translation initiation factor 4E-binding protein 1 (117 aa).

Polar residues-rich tracts occupy residues 1–12 (MSAGSSCSQTPS) and 33–47 (YSTT…TTPG). A disordered region spans residues 1-47 (MSAGSSCSQTPSRAIPTRRVALGDGVQLPPGDYSTTPGGTLFSTTPG). Position 2 is an N-acetylserine (Ser-2). Phosphothreonine is present on residues Thr-36 and Thr-40. Phosphoserine is present on Ser-43. At Thr-45 the chain carries Phosphothreonine; by MTOR. Residue Thr-49 is modified to Phosphothreonine. Tyr-53 is subject to Phosphotyrosine. Positions 53 to 59 (YDRKFLM) match the YXXXXLphi motif motif. Residue Lys-56 forms a Glycyl lysine isopeptide (Lys-Gly) (interchain with G-Cter in ubiquitin) linkage. Ser-64 bears the Phosphoserine; by DYRK2, MAPK1, MAPK3 and MTOR mark. The segment at 64-117 (SPVAKTPPKDLPTIPGVTSPTSDEPPMQASQSHLHSSPEDKRAGGEESQFEMDI) is disordered. Thr-69 carries the post-translational modification Phosphothreonine; by MTOR. Phosphothreonine is present on Thr-76. Residues 79–98 (GVTSPTSDEPPMQASQSHLH) show a composition bias toward polar residues. 3 positions are modified to phosphoserine: Ser-82, Ser-95, and Ser-99. The span at 99–108 (SSPEDKRAGG) shows a compositional bias: basic and acidic residues. At Ser-100 the chain carries Phosphoserine; by DYRK2. Residue Ser-111 is modified to Phosphoserine. The TOS motif motif lies at 113–117 (FEMDI).

The protein belongs to the eIF4E-binding protein family. As to quaternary structure, hypophosphorylated EIF4EBP1 competes with EIF4G1/EIF4G3 to interact with EIF4E; insulin stimulated MAP-kinase (MAPK1 and MAPK3) or mTORC1 phosphorylation of EIF4EBP1 causes dissociation of the complex allowing EIF4G1/EIF4G3 to bind and consequent initiation of translation. Interacts (via TOS motif) with RPTOR; promoting phosphorylation by mTORC1. Phosphorylated on serine and threonine residues in response to insulin, EGF and PDGF. Phosphorylation at Thr-36, Thr-45, Ser-64 and Thr-69, corresponding to the hyperphosphorylated form, is regulated by mTORC1 and abolishes binding to EIF4E. Post-translationally, ubiquitinated: when eIF4E levels are low, hypophosphorylated form is ubiquitinated by the BCR(KLHL25) complex, leading to its degradation and serving as a homeostatic mechanism to maintain translation and prevent eIF4E inhibition when eIF4E levels are low. Not ubiquitinated when hyperphosphorylated (at Thr-36, Thr-45, Ser-64 and Thr-69) or associated with eIF4E. Expressed in all tissues examined; highest levels in fat and skeletal tissue, lowest levels in kidney.

It localises to the cytoplasm. It is found in the nucleus. Its function is as follows. Repressor of translation initiation that regulates EIF4E activity by preventing its assembly into the eIF4F complex: hypophosphorylated form competes with EIF4G1/EIF4G3 and strongly binds to EIF4E, leading to repress translation. In contrast, hyperphosphorylated form dissociates from EIF4E, allowing interaction between EIF4G1/EIF4G3 and EIF4E, leading to initiation of translation. Mediates the regulation of protein translation by hormones, growth factors and other stimuli that signal through the MAP kinase and mTORC1 pathways. This Rattus norvegicus (Rat) protein is Eukaryotic translation initiation factor 4E-binding protein 1 (Eif4ebp1).